A 273-amino-acid polypeptide reads, in one-letter code: Dermonecrotic toxin LarSicTox-alphaVII1 (273 aa).

His5 is an active-site residue. Mg(2+) is bound by residues Glu25 and Asp27. The Nucleophile role is filled by His41. Cystine bridges form between Cys45/Cys51 and Cys47/Cys192. Residue Asp85 participates in Mg(2+) binding.

It belongs to the arthropod phospholipase D family. Class II subfamily. It depends on Mg(2+) as a cofactor. Expressed by the venom gland.

It is found in the secreted. It catalyses the reaction an N-(acyl)-sphingosylphosphocholine = an N-(acyl)-sphingosyl-1,3-cyclic phosphate + choline. The enzyme catalyses an N-(acyl)-sphingosylphosphoethanolamine = an N-(acyl)-sphingosyl-1,3-cyclic phosphate + ethanolamine. It carries out the reaction a 1-acyl-sn-glycero-3-phosphocholine = a 1-acyl-sn-glycero-2,3-cyclic phosphate + choline. The catalysed reaction is a 1-acyl-sn-glycero-3-phosphoethanolamine = a 1-acyl-sn-glycero-2,3-cyclic phosphate + ethanolamine. Functionally, dermonecrotic toxins cleave the phosphodiester linkage between the phosphate and headgroup of certain phospholipids (sphingolipid and lysolipid substrates), forming an alcohol (often choline) and a cyclic phosphate. This toxin acts on sphingomyelin (SM). It may also act on ceramide phosphoethanolamine (CPE), lysophosphatidylcholine (LPC) and lysophosphatidylethanolamine (LPE), but not on lysophosphatidylserine (LPS), and lysophosphatidylglycerol (LPG). It acts by transphosphatidylation, releasing exclusively cyclic phosphate products as second products. Induces dermonecrosis, hemolysis, increased vascular permeability, edema, inflammatory response, and platelet aggregation. In Loxosceles arizonica (Arizona brown spider), this protein is Dermonecrotic toxin LarSicTox-alphaVII1.